Reading from the N-terminus, the 107-residue chain is U1-lycotoxin-Ls1m (107 aa).

Residues 1-20 (MMKVLVVVALLVTLISYSSS) form the signal peptide. A propeptide spanning residues 21-41 (EGIDDLEADELLSLMANEQTR) is cleaved from the precursor. 4 disulfide bridges follow: C44-C59, C51-C68, C58-C86, and C70-C84.

The protein belongs to the neurotoxin 19 (CSTX) family. 04 (U1-Lctx) subfamily. Expressed by the venom gland.

It is found in the secreted. The protein is U1-lycotoxin-Ls1m of Lycosa singoriensis (Wolf spider).